We begin with the raw amino-acid sequence, 364 residues long: Phosphoserine aminotransferase (364 aa).

R42 contacts L-glutamate. Residues 76–77 (GR), W102, T156, D175, and Q198 each bind pyridoxal 5'-phosphate. Residue K199 is modified to N6-(pyridoxal phosphate)lysine. 240–241 (NT) is a binding site for pyridoxal 5'-phosphate.

Belongs to the class-V pyridoxal-phosphate-dependent aminotransferase family. SerC subfamily. As to quaternary structure, homodimer. Pyridoxal 5'-phosphate is required as a cofactor.

It is found in the cytoplasm. It carries out the reaction O-phospho-L-serine + 2-oxoglutarate = 3-phosphooxypyruvate + L-glutamate. The enzyme catalyses 4-(phosphooxy)-L-threonine + 2-oxoglutarate = (R)-3-hydroxy-2-oxo-4-phosphooxybutanoate + L-glutamate. It functions in the pathway amino-acid biosynthesis; L-serine biosynthesis; L-serine from 3-phospho-D-glycerate: step 2/3. Its pathway is cofactor biosynthesis; pyridoxine 5'-phosphate biosynthesis; pyridoxine 5'-phosphate from D-erythrose 4-phosphate: step 3/5. In terms of biological role, catalyzes the reversible conversion of 3-phosphohydroxypyruvate to phosphoserine and of 3-hydroxy-2-oxo-4-phosphonooxybutanoate to phosphohydroxythreonine. This chain is Phosphoserine aminotransferase, found in Shewanella sediminis (strain HAW-EB3).